The primary structure comprises 373 residues: MASGGALSPVEEKPTVVKTTKAEQHEEEAAVAVKSAAEMMKKSSPCCPRCNSIKTKFCYYNNYSMAQPRYFCRECRRYWTQGGSLRNVPVGGGCRKSKRSSASSASASAASPPAPAVGAAPPVVPALSSAISKLLQSEPMAAPCADFPNVLPTFVSTGFELPAAAGDRLSLGSFGAFGNLSAAVAAPGGGGGSSTTTSFMDMLRGVGGLFDGVGNSHQMGGNGGGGGSYYAPLITGAGNGMLMPPPPLPPFSGSLMQHGMQGLFANHAMGGGGGGVMNAGEDGSVMAGLGGGQWPPALGGADEQQGGGDGGEAVMTKDTGGGASSSASRPDYFYGWNSAAGGVVAGGGIGGNAAAATGATPWQGLIDSSSAMM.

The disordered stretch occupies residues 1-23; it reads MASGGALSPVEEKPTVVKTTKAE. Positions 10-23 are enriched in basic and acidic residues; the sequence is VEEKPTVVKTTKAE. Residues 45-99 form a Dof-type zinc finger; the sequence is PCCPRCNSIKTKFCYYNNYSMAQPRYFCRECRRYWTQGGSLRNVPVGGGCRKSKR. Zn(2+)-binding residues include Cys-47, Cys-50, Cys-72, and Cys-75. Positions 297–327 are disordered; that stretch reads ALGGADEQQGGGDGGEAVMTKDTGGGASSSA.

Interacts with RISBZ1/BZIP58.

It localises to the nucleus. Functionally, transcriptional activator that binds specifically to the DNA consensus core sequence 5'-AAAG-3' also known as prolamin box. Can activate the expression of genes encoding for the seed storage proteins glutelin, prolamin and globulin. Functions synergistically with RISBZ/BZIP58 to positively regulate quantitatively many seed storage proteins. Functions synergistically with RISBZ1/BZIP58 to positively regulate some metabolic enzymes, such as alanine aminotransferase and pyruvate phosphate dikinase, that are expressed in developing seeds. Functions synergistically with RISBZ1/BZIP58 to positively regulate genes that are key players in the development of aleurone layers. Functions synergistically with RISBZ1/BZIP58 to positively regulate the glutelin GLUD-1 gene in endosperm of developing seeds. Can activate the expression of the bifunctional lysine-degrading enzyme, lysine ketoglutarate reductase/saccharopine dehydrogenase (LKR/SDH), one of the key regulators determining free lysine content in plants. In germinating seeds, involved in the gibberellin-mediated activation of the alpha-amylase AMY1.1/AMY1A gene. This Oryza sativa subsp. japonica (Rice) protein is Dof zinc finger protein 3.